The chain runs to 237 residues: Oligoribonuclease, mitochondrial (237 aa).

Residues 1–25 (MLGGSLGSRLLRGVGGTRGQFRARG) constitute a mitochondrion transit peptide. The Exonuclease domain occupies 43-207 (MVWVDLEMTG…DDISESIKEL (165 aa)). 2 residues coordinate Mg(2+): D47 and E49. Position 92 is a phosphoserine (S92). Y122 carries the post-translational modification Phosphotyrosine. D147 contacts Mg(2+). K173 carries the N6-acetyllysine modification. Residue H194 is part of the active site. Residue D199 coordinates Mg(2+).

It belongs to the oligoribonuclease family. In terms of assembly, homodimer. Homotetramer. It depends on Mn(2+) as a cofactor. Mg(2+) serves as cofactor.

The protein localises to the mitochondrion intermembrane space. The protein resides in the mitochondrion matrix. It localises to the mitochondrion. Its subcellular location is the cytoplasm. It is found in the nucleus. In terms of biological role, 3'-to-5'exoribonuclease that preferentially degrades DNA and RNA oligonucleotides composed of only two nucleotides. Binds and degrades longer oligonucleotides with a lower affinity. Plays dual roles in mitochondria, scavenging nanoRNAs (small RNA oligonucleotides of &lt;5 nucleotides) that are produced by the degradosome and clearing short RNAs that are generated by RNA processing. Essential for correct initiation of mitochondrial transcription, degrading mitochondrial RNA dinucleotides to prevent RNA-primed transcription at non-canonical sites in the mitochondrial genome. Essential for embryonic development. This is Oligoribonuclease, mitochondrial (REXO2) from Bos taurus (Bovine).